The sequence spans 302 residues: Putative receptor-like protein 16 (302 aa).

LRR repeat units follow at residues 1–19, 20–43, and 45–70; these read MNLTTNGFQRNLPSSLGNM, EMIEFLDISHNSFHGKLPRSFLKG, and DSLIVLKLSHKKLSEEVFPEASNFFS. An LRR 4; degenerate repeat occupies 72 to 91; that stretch reads LELSMDNNLFTGKIGRGLQS. 7 LRR repeats span residues 92-115, 116-140, 142-164, 166-188, 190-211, 213-234, and 235-258; these read LRSLIMLDISNNNLSGVIPSWFDQ, LQDLHSLQISNNLLEGEVPISLFNM, SLQLLALSANSLSGDLPQAISGY, ALKVLLLRDNNLSGVIPDTLLGK, IIVLDLRNNRLSGNIPEFINTQ, IRILLLRGNNLTGSIPRRLCAV, and RSIHLLDLANNKLNGSIPSCLRNA.

It belongs to the RLP family.

The polypeptide is Putative receptor-like protein 16 (Arabidopsis thaliana (Mouse-ear cress)).